Reading from the N-terminus, the 357-residue chain is Membrane-bound lytic murein transglycosylase C (357 aa).

A signal peptide spans 1–15 (MKKYLLLALLPFLYA). Cysteine 16 is lipidated: N-palmitoyl cysteine. Cysteine 16 carries the S-diacylglycerol cysteine lipid modification.

This sequence belongs to the transglycosylase Slt family.

The protein localises to the cell outer membrane. It catalyses the reaction Exolytic cleavage of the (1-&gt;4)-beta-glycosidic linkage between N-acetylmuramic acid (MurNAc) and N-acetylglucosamine (GlcNAc) residues in peptidoglycan, from either the reducing or the non-reducing ends of the peptidoglycan chains, with concomitant formation of a 1,6-anhydrobond in the MurNAc residue.. Its function is as follows. Murein-degrading enzyme. May play a role in recycling of muropeptides during cell elongation and/or cell division. This is Membrane-bound lytic murein transglycosylase C from Haemophilus influenzae (strain 86-028NP).